The sequence spans 168 residues: Protein-export protein SecB (168 aa).

Belongs to the SecB family. As to quaternary structure, homotetramer, a dimer of dimers. One homotetramer interacts with 1 SecA dimer.

It is found in the cytoplasm. Functionally, one of the proteins required for the normal export of preproteins out of the cell cytoplasm. It is a molecular chaperone that binds to a subset of precursor proteins, maintaining them in a translocation-competent state. It also specifically binds to its receptor SecA. The sequence is that of Protein-export protein SecB from Glaesserella parasuis serovar 5 (strain SH0165) (Haemophilus parasuis).